A 104-amino-acid polypeptide reads, in one-letter code: Guanyl-specific ribonuclease Ap1 (104 aa).

Cystine bridges form between cysteine 2/cysteine 10 and cysteine 6/cysteine 103. The active site involves histidine 40. Glutamate 58 acts as the Proton acceptor in catalysis. Histidine 92 serves as the catalytic Proton donor.

Belongs to the ribonuclease N1/T1 family.

The protein localises to the secreted. The catalysed reaction is [RNA] containing guanosine + H2O = an [RNA fragment]-3'-guanosine-3'-phosphate + a 5'-hydroxy-ribonucleotide-3'-[RNA fragment].. In Aspergillus pallidus, this protein is Guanyl-specific ribonuclease Ap1.